We begin with the raw amino-acid sequence, 238 residues long: Probable transcriptional regulatory protein CF0838 (238 aa).

This sequence belongs to the TACO1 family.

The protein localises to the cytoplasm. The polypeptide is Probable transcriptional regulatory protein CF0838 (Chlamydia felis (strain Fe/C-56) (Chlamydophila felis)).